The sequence spans 286 residues: NAD kinase (286 aa).

Asp-74 (proton acceptor) is an active-site residue. Residues 74-75 (DG), 148-149 (ND), Asp-178, Ala-186, 189-194 (TAYNLS), and Gln-244 contribute to the NAD(+) site.

Belongs to the NAD kinase family. A divalent metal cation is required as a cofactor.

Its subcellular location is the cytoplasm. The enzyme catalyses NAD(+) + ATP = ADP + NADP(+) + H(+). In terms of biological role, involved in the regulation of the intracellular balance of NAD and NADP, and is a key enzyme in the biosynthesis of NADP. Catalyzes specifically the phosphorylation on 2'-hydroxyl of the adenosine moiety of NAD to yield NADP. The chain is NAD kinase from Campylobacter jejuni subsp. jejuni serotype O:23/36 (strain 81-176).